We begin with the raw amino-acid sequence, 616 residues long: Glycoprotein Q1 (616 aa).

The first 24 residues, 1–24, serve as a signal peptide directing secretion; sequence MRPPRRSAPILVCAISMATALSNA. N-linked (GlcNAc...) asparagine; by host glycans are attached at residues Asn-23, Asn-44, Asn-282, Asn-330, and Asn-351.

In terms of assembly, interacts with isoform gQ2. The heterodimer gQ1-gQ2 associates with the glycoprotein complex gH-gL to form a tetrameric complex. The gH/gL/gQ1/gQ2 complex binds to host TNFRSF4. Glycosylated by host.

It localises to the virion. It is found in the host endoplasmic reticulum lumen. Functionally, plays a role in virus entry by participating in host receptor binding at the cell surface. The sequence is that of Glycoprotein Q1 from Homo sapiens (Human).